A 350-amino-acid chain; its full sequence is MHQDGISSMNQLGGLFVNGRPLPLDTRQQIVRLAVSGMRPCDISRILKVSNGCVSKILGRYYRTGVLEPKGIGGSKPRLATPPVVARIAQLKGECPALFAWEIQRQLCAEGLCTQDKTPSVSSINRVLRALQEDQGLPCTRLRSPAVLAPAVLTPHSGSETPRGTHPGTGHRNRTIFSPSQAEALEKEFQRGQYPDSVARGKLATATSLPEDTVRVWFSNRRAKWRRQEKLKWEMQLPGASQGLTVPRVAPGIISAQQSPGSVPTAALPALEPLGPSCYQLCWATAPERCLSDTPPKACLKPCWDCGSFLLPVIAPSCVDVAWPCLDASLAHHLIGGAGKATPTHFSHWP.

Positions 5–131 (GISSMNQLGG…SSINRVLRAL (127 aa)) form a DNA-binding region, paired. The interval 8–64 (SMNQLGGLFVNGRPLPLDTRQQIVRLAVSGMRPCDISRILKVSNGCVSKILGRYYRT) is PAI subdomain. The tract at residues 83-131 (PVVARIAQLKGECPALFAWEIQRQLCAEGLCTQDKTPSVSSINRVLRAL) is RED subdomain. Positions 153 to 172 (LTPHSGSETPRGTHPGTGHR) are disordered. The segment at residues 170–229 (GHRNRTIFSPSQAEALEKEFQRGQYPDSVARGKLATATSLPEDTVRVWFSNRRAKWRRQE) is a DNA-binding region (homeobox). The transcription repression stretch occupies residues 278–350 (CYQLCWATAP…ATPTHFSHWP (73 aa)).

This sequence belongs to the paired homeobox family.

Its subcellular location is the nucleus. Its function is as follows. Plays an important role in the differentiation and development of pancreatic islet beta cells. Transcriptional repressor that binds to a common element in the glucagon, insulin and somatostatin promoters. Competes with PAX6 for this same promoter binding site. Isoform 2 appears to be a dominant negative form antagonizing PAX4 transcriptional activity. The polypeptide is Paired box protein Pax-4 (PAX4) (Homo sapiens (Human)).